Reading from the N-terminus, the 551-residue chain is Cytochrome c oxidase subunit 1 (551 aa).

A helical transmembrane segment spans residues 29-49; sequence VIGIQYLVTSFLFFFIGGSFA. Histidine 76 contributes to the Fe(II)-heme a binding site. Helical transmembrane passes span 79-99, 113-133, 156-176, 205-225, 245-265, 283-303, 313-333, 348-368, 382-402, 424-444, and 466-486; these read IMIF…LIPL, AVAF…FFVG, LWIL…INFV, LILL…FDLI, LFWF…FGVI, IAYS…HHMF, MFFM…IFSW, MLFA…GVMV, FVVG…LFSG, FILT…LGLM, and IGAY…FWSL. Residues histidine 251, tyrosine 255, histidine 300, and histidine 301 each contribute to the Cu cation site. Positions 251–255 form a cross-link, 1'-histidyl-3'-tyrosine (His-Tyr); that stretch reads HPAVY. Histidine 386 contacts heme a3. Fe(II)-heme a is bound at residue histidine 388.

The protein belongs to the heme-copper respiratory oxidase family. Requires Cu(2+) as cofactor. Heme serves as cofactor.

The protein localises to the cell membrane. It catalyses the reaction 4 Fe(II)-[cytochrome c] + O2 + 8 H(+)(in) = 4 Fe(III)-[cytochrome c] + 2 H2O + 4 H(+)(out). The protein operates within energy metabolism; oxidative phosphorylation. Functionally, cytochrome c oxidase is the component of the respiratory chain that catalyzes the reduction of oxygen to water. Subunits 1-3 form the functional core of the enzyme complex. CO I is the catalytic subunit of the enzyme. Electrons originating in cytochrome c are transferred via the copper A center of subunit 2 and heme A of subunit 1 to the bimetallic center formed by heme A3 and copper B. In Synechocystis sp. (strain ATCC 27184 / PCC 6803 / Kazusa), this protein is Cytochrome c oxidase subunit 1 (ctaD).